The following is a 302-amino-acid chain: 4-hydroxy-tetrahydrodipicolinate synthase (302 aa).

T46 is a pyruvate binding site. Y134 functions as the Proton donor/acceptor in the catalytic mechanism. The active-site Schiff-base intermediate with substrate is the K162. I204 provides a ligand contact to pyruvate.

The protein belongs to the DapA family. As to quaternary structure, homotetramer; dimer of dimers.

The protein resides in the cytoplasm. It catalyses the reaction L-aspartate 4-semialdehyde + pyruvate = (2S,4S)-4-hydroxy-2,3,4,5-tetrahydrodipicolinate + H2O + H(+). It functions in the pathway amino-acid biosynthesis; L-lysine biosynthesis via DAP pathway; (S)-tetrahydrodipicolinate from L-aspartate: step 3/4. Its function is as follows. Catalyzes the condensation of (S)-aspartate-beta-semialdehyde [(S)-ASA] and pyruvate to 4-hydroxy-tetrahydrodipicolinate (HTPA). The polypeptide is 4-hydroxy-tetrahydrodipicolinate synthase (Xanthomonas axonopodis pv. citri (strain 306)).